The primary structure comprises 538 residues: Syncytin-1 (538 aa).

Residues methionine 1–threonine 20 form the signal peptide. The Extracellular portion of the chain corresponds to alanine 21–glutamine 443. A glycan (N-linked (GlcNAc...) asparagine) is linked at asparagine 169. Residues cysteine 186–cysteine 189 carry the CXXC motif. 3 disulfides stabilise this stretch: cysteine 186–cysteine 189, cysteine 186–cysteine 405, and cysteine 397–cysteine 404. N-linked (GlcNAc...) asparagine glycosylation is found at asparagine 208, asparagine 214, asparagine 234, asparagine 242, asparagine 245, and asparagine 281. Positions isoleucine 320–isoleucine 340 are fusion peptide. The immunosuppression stretch occupies residues leucine 380 to threonine 396. Residues cysteine 397–cysteine 405 carry the CX6CC motif. Residue asparagine 409 is glycosylated (N-linked (GlcNAc...) asparagine). Residues tryptophan 444–phenylalanine 464 traverse the membrane as a helical segment. The segment at glycine 465 to lysine 484 is essential for the fusiogenic function. Topologically, residues glycine 465 to serine 538 are cytoplasmic. The tract at residues proline 501–serine 538 is disordered.

This sequence belongs to the gamma type-C retroviral envelope protein family. HERV class-I W env subfamily. As to quaternary structure, the mature envelope protein (Env) consists of a trimer of SU-TM heterodimers attached probably by a labile interchain disulfide bond. Interacts with the C-type lectin CD209/DC-SIGN. In terms of processing, specific enzymatic cleavages in vivo yield mature proteins. Envelope glycoproteins are synthesized as an inactive precursor that is heavily N-glycosylated and processed likely by furin in the Golgi to yield the mature SU and TM proteins. The cleavage site between SU and TM requires the minimal sequence [KR]-X-[KR]-R. The CXXC motif is highly conserved across a broad range of retroviral envelope proteins. It is thought to participate in the formation of a labile disulfide bond possibly with the CX6CC motif present in the transmembrane protein.

The protein resides in the cell membrane. Its subcellular location is the virion. Functionally, this endogenous retroviral envelope protein has retained its original fusogenic properties and participates in trophoblast fusion and the formation of a syncytium during placenta morphogenesis. May recognize and induce fusion through binding of SLC1A4 and SLC1A5. In terms of biological role, endogenous envelope proteins may have kept, lost or modified their original function during evolution. Retroviral envelope proteins mediate receptor recognition and membrane fusion during early infection. The surface protein (SU) mediates receptor recognition, while the transmembrane protein (TM) acts as a class I viral fusion protein. The protein may have at least 3 conformational states: pre-fusion native state, pre-hairpin intermediate state, and post-fusion hairpin state. During viral and target cell membrane fusion, the coiled coil regions (heptad repeats) assume a trimer-of-hairpins structure, positioning the fusion peptide in close proximity to the C-terminal region of the ectodomain. The formation of this structure appears to drive apposition and subsequent fusion of membranes. The sequence is that of Syncytin-1 (ERVW-1) from Pongo pygmaeus (Bornean orangutan).